The following is a 231-amino-acid chain: 7-cyano-7-deazaguanine synthase (231 aa).

8 to 18 is a binding site for ATP; it reads FSGGQDSTTCL. Residues Cys188, Cys197, Cys200, and Cys203 each coordinate Zn(2+).

The protein belongs to the QueC family. Requires Zn(2+) as cofactor.

It catalyses the reaction 7-carboxy-7-deazaguanine + NH4(+) + ATP = 7-cyano-7-deazaguanine + ADP + phosphate + H2O + H(+). It functions in the pathway purine metabolism; 7-cyano-7-deazaguanine biosynthesis. Its function is as follows. Catalyzes the ATP-dependent conversion of 7-carboxy-7-deazaguanine (CDG) to 7-cyano-7-deazaguanine (preQ(0)). In Escherichia coli (strain ATCC 8739 / DSM 1576 / NBRC 3972 / NCIMB 8545 / WDCM 00012 / Crooks), this protein is 7-cyano-7-deazaguanine synthase.